Here is a 238-residue protein sequence, read N- to C-terminus: Adapter protein MecA (238 aa).

Over residues Gln-120 to Arg-136 the composition is skewed to basic and acidic residues. The segment at Gln-120 to Thr-139 is disordered.

This sequence belongs to the MecA family. As to quaternary structure, homodimer.

In terms of biological role, enables the recognition and targeting of unfolded and aggregated proteins to the ClpC protease or to other proteins involved in proteolysis. The polypeptide is Adapter protein MecA (Staphylococcus saprophyticus subsp. saprophyticus (strain ATCC 15305 / DSM 20229 / NCIMB 8711 / NCTC 7292 / S-41)).